The sequence spans 236 residues: Ubiquinone biosynthesis O-methyltransferase (236 aa).

S-adenosyl-L-methionine is bound by residues arginine 36, glycine 56, aspartate 77, and methionine 125.

The protein belongs to the methyltransferase superfamily. UbiG/COQ3 family.

The catalysed reaction is a 3-demethylubiquinol + S-adenosyl-L-methionine = a ubiquinol + S-adenosyl-L-homocysteine + H(+). It carries out the reaction a 3-(all-trans-polyprenyl)benzene-1,2-diol + S-adenosyl-L-methionine = a 2-methoxy-6-(all-trans-polyprenyl)phenol + S-adenosyl-L-homocysteine + H(+). Its pathway is cofactor biosynthesis; ubiquinone biosynthesis. O-methyltransferase that catalyzes the 2 O-methylation steps in the ubiquinone biosynthetic pathway. The polypeptide is Ubiquinone biosynthesis O-methyltransferase (Haemophilus ducreyi (strain 35000HP / ATCC 700724)).